The following is a 564-amino-acid chain: uncharacterized protein (564 aa).

8 helical membrane passes run T12–L32, M97–L119, A139–W161, F188–I208, W213–Y233, M277–F297, N306–F326, and F348–W368.

The protein localises to the cell membrane. This is an uncharacterized protein from Bacillus subtilis (strain 168).